The following is a 115-amino-acid chain: SOSS complex subunit C homolog (115 aa).

This sequence belongs to the SOSS-C family.

The sequence is that of SOSS complex subunit C homolog from Drosophila grimshawi (Hawaiian fruit fly).